The primary structure comprises 527 residues: Bifunctional purine biosynthesis protein PurH (527 aa).

One can recognise an MGS-like domain in the interval 1–149; that stretch reads MASDFLPVRR…KNFARVAVAT (149 aa).

Belongs to the PurH family.

The catalysed reaction is (6R)-10-formyltetrahydrofolate + 5-amino-1-(5-phospho-beta-D-ribosyl)imidazole-4-carboxamide = 5-formamido-1-(5-phospho-D-ribosyl)imidazole-4-carboxamide + (6S)-5,6,7,8-tetrahydrofolate. It catalyses the reaction IMP + H2O = 5-formamido-1-(5-phospho-D-ribosyl)imidazole-4-carboxamide. It participates in purine metabolism; IMP biosynthesis via de novo pathway; 5-formamido-1-(5-phospho-D-ribosyl)imidazole-4-carboxamide from 5-amino-1-(5-phospho-D-ribosyl)imidazole-4-carboxamide (10-formyl THF route): step 1/1. It functions in the pathway purine metabolism; IMP biosynthesis via de novo pathway; IMP from 5-formamido-1-(5-phospho-D-ribosyl)imidazole-4-carboxamide: step 1/1. In Xanthomonas campestris pv. campestris (strain 8004), this protein is Bifunctional purine biosynthesis protein PurH.